We begin with the raw amino-acid sequence, 196 residues long: Thymidine kinase (196 aa).

ATP is bound at residue 17–24 (GPMFAGKT). Residue E92 is the Proton acceptor of the active site. F121 provides a ligand contact to substrate. Residues C146 and C149 each coordinate Zn(2+). 166–170 (LILAG) is a binding site for substrate. Residues C179 and C182 each coordinate Zn(2+).

The protein belongs to the thymidine kinase family.

The catalysed reaction is thymidine + ATP = dTMP + ADP + H(+). Phosphorylates thymidine. ASFV replicates in the cytoplasm of infected cells and contains genes encoding a number of enzymes needed for DNA synthesis, including thymidine kinase. Important for growth in swine macrophages in vitro and is a virus virulence factor in swine. The sequence is that of Thymidine kinase from Ornithodoros (relapsing fever ticks).